Here is a 127-residue protein sequence, read N- to C-terminus: Modulator protein MzrA (127 aa).

The Cytoplasmic segment spans residues 1–9 (MQLPRVTLR). The helical transmembrane segment at 10–32 (QMTWTTSAIVLLGITLLLWSAFR) threads the bilayer. The Periplasmic segment spans residues 33 to 127 (HQESTLAIRA…LLRDTSHRFG (95 aa)).

It belongs to the MzrA family. Interacts with EnvZ.

The protein resides in the cell inner membrane. Its function is as follows. Modulates the activity of the EnvZ/OmpR two-component regulatory system, probably by directly modulating EnvZ enzymatic activity and increasing stability of phosphorylated OmpR. In Escherichia fergusonii (strain ATCC 35469 / DSM 13698 / CCUG 18766 / IAM 14443 / JCM 21226 / LMG 7866 / NBRC 102419 / NCTC 12128 / CDC 0568-73), this protein is Modulator protein MzrA.